The chain runs to 218 residues: Thiopurine S-methyltransferase (218 aa).

Residues tryptophan 10, leucine 45, glutamate 66, and arginine 123 each contribute to the S-adenosyl-L-methionine site.

This sequence belongs to the class I-like SAM-binding methyltransferase superfamily. TPMT family.

The protein resides in the cytoplasm. It carries out the reaction S-adenosyl-L-methionine + a thiopurine = S-adenosyl-L-homocysteine + a thiopurine S-methylether.. This is Thiopurine S-methyltransferase from Shewanella baltica (strain OS185).